A 288-amino-acid chain; its full sequence is Transposase for insertion sequence element IS1106 (288 aa).

This sequence belongs to the transposase 11 family.

Involved in the transposition of the insertion sequence. In Neisseria meningitidis serogroup B, this protein is Transposase for insertion sequence element IS1106.